The following is a 492-amino-acid chain: Ketol-acid reductoisomerase (NADP(+)) (492 aa).

A KARI N-terminal Rossmann domain is found at 15–208; sequence AQLGKCRFMA…GGHRAGVLEF (194 aa). NADP(+) contacts are provided by residues 45–48, Arg-68, Arg-76, Ser-78, and 108–110; these read CGAQ and DKQ. His-132 is a catalytic residue. NADP(+) is bound at residue Gly-158. 2 consecutive KARI C-terminal knotted domains span residues 209–344 and 345–485; these read SFVA…NAPQ and FEGK…MTDM. Asp-217, Glu-221, Glu-389, and Glu-393 together coordinate Mg(2+). Ser-414 is a binding site for substrate.

The protein belongs to the ketol-acid reductoisomerase family. Mg(2+) is required as a cofactor.

The enzyme catalyses (2R)-2,3-dihydroxy-3-methylbutanoate + NADP(+) = (2S)-2-acetolactate + NADPH + H(+). It carries out the reaction (2R,3R)-2,3-dihydroxy-3-methylpentanoate + NADP(+) = (S)-2-ethyl-2-hydroxy-3-oxobutanoate + NADPH + H(+). It participates in amino-acid biosynthesis; L-isoleucine biosynthesis; L-isoleucine from 2-oxobutanoate: step 2/4. The protein operates within amino-acid biosynthesis; L-valine biosynthesis; L-valine from pyruvate: step 2/4. In terms of biological role, involved in the biosynthesis of branched-chain amino acids (BCAA). Catalyzes an alkyl-migration followed by a ketol-acid reduction of (S)-2-acetolactate (S2AL) to yield (R)-2,3-dihydroxy-isovalerate. In the isomerase reaction, S2AL is rearranged via a Mg-dependent methyl migration to produce 3-hydroxy-3-methyl-2-ketobutyrate (HMKB). In the reductase reaction, this 2-ketoacid undergoes a metal-dependent reduction by NADPH to yield (R)-2,3-dihydroxy-isovalerate. The protein is Ketol-acid reductoisomerase (NADP(+)) of Yersinia pestis bv. Antiqua (strain Antiqua).